The chain runs to 89 residues: MNKNEKMVRSLMGTVVSNKMNDTVVVRVERRVKHPKYGKFIKRSTKIHAHDKGNEGQIGDIVTIRECRPISKTKSWTLVKINERAEKVE.

This sequence belongs to the universal ribosomal protein uS17 family. In terms of assembly, part of the 30S ribosomal subunit.

In terms of biological role, one of the primary rRNA binding proteins, it binds specifically to the 5'-end of 16S ribosomal RNA. The polypeptide is Small ribosomal subunit protein uS17 (Coxiella burnetii (strain RSA 493 / Nine Mile phase I)).